The primary structure comprises 23 residues: SLVQFEMMIMEVAKRSGLLWYSA.

This sequence belongs to the phospholipase A2 family. Group II subfamily. D49 sub-subfamily. It depends on Ca(2+) as a cofactor. Contains 7 disulfide bonds. As to expression, expressed by the venom gland.

The protein resides in the secreted. It carries out the reaction a 1,2-diacyl-sn-glycero-3-phosphocholine + H2O = a 1-acyl-sn-glycero-3-phosphocholine + a fatty acid + H(+). Its function is as follows. Snake venom phospholipase A2 (PLA2) that shows high lipolytic (1048 umol/mg/min) and weak ADP-induced platelet aggregation activities. Also shows weak anticoagulant activity (IC(50) is less than 1.0 uM). PLA2 catalyzes the calcium-dependent hydrolysis of the 2-acyl groups in 3-sn-phosphoglycerides. The polypeptide is Acidic phospholipase CHA-E6a (Crotalus horridus (Timber rattlesnake)).